The primary structure comprises 75 residues: Small ribosomal subunit protein bS18 (75 aa).

The protein belongs to the bacterial ribosomal protein bS18 family. As to quaternary structure, part of the 30S ribosomal subunit. Forms a tight heterodimer with protein bS6.

In terms of biological role, binds as a heterodimer with protein bS6 to the central domain of the 16S rRNA, where it helps stabilize the platform of the 30S subunit. This is Small ribosomal subunit protein bS18 from Shewanella amazonensis (strain ATCC BAA-1098 / SB2B).